A 201-amino-acid chain; its full sequence is MLAFTLRFIKNKRYLATLAGALVIIAGLTSQHAWSGNGLPQINGKALAALAKQHPVVVLFRHVERCDRSDNTCLSDSTGITVNGAQDARALGKAFSADIQNYNLYSSNTVRTIQSATWFSAGRSLTVDKKMMDCGSGIYASINTLLKKSQNKNIVIFTHNHCLTYIAKNKRGVKFDPDYLNALVMHAENGKLFLDGEFVPG.

An N-terminal signal peptide occupies residues 1-35 (MLAFTLRFIKNKRYLATLAGALVIIAGLTSQHAWS).

Belongs to the phosphoglycerate mutase family. Ais subfamily.

The protein localises to the periplasm. It participates in bacterial outer membrane biogenesis; lipopolysaccharide metabolism. Catalyzes the dephosphorylation of heptose(II) of the outer membrane lipopolysaccharide core. The protein is Lipopolysaccharide core heptose(II)-phosphate phosphatase of Salmonella choleraesuis (strain SC-B67).